The chain runs to 332 residues: MLLKEYRICMPLTVDEYKIGQLYMISKHSHEQSDRGEGVEVVQNEPFEDPHHGNGQFTEKRVYLNSKLPSWARAVVPKIFYVTEKAWNYYPYTITEYTCSFLPKFSIHIETKYEDNKGSNDSIFDSEAKDLEREVCFIDIACDEIPERYYKESEDPKHFKSEKTGRGQLREGWRDNHQPIMCSYKLVTVKFEVWGLQTRVEQFVHKVVRDILLIGHRQAFAWVDEWYDMTMDEVREFERATQEATNKKIGVFPPAISISSIALLPSSVRSAPSSAPSTPLSTDAPEFLSIPKDRPRKKSAPETLTLPDPEKKATLNLPGVYTSEKPCRPKSE.

4 positions are modified to phosphoserine: Ser-119, Ser-122, Ser-270, and Ser-274. Over residues 272-281 (PSSAPSTPLS) the composition is skewed to low complexity. Positions 272–332 (PSSAPSTPLS…SEKPCRPKSE (61 aa)) are disordered. Thr-278 carries the post-translational modification Phosphothreonine.

The protein belongs to the PtdIns transfer protein family. PI transfer class IIB subfamily. Widely expressed in brain, with expression in the gray matters of pre- and postnatal brains. In terms of tissue distribution, weakly expressed in brain and is rather confined to the embryonic stage.

The protein resides in the cytoplasm. It is found in the nucleus. The enzyme catalyses a 1,2-diacyl-sn-glycero-3-phospho-(1D-myo-inositol)(in) = a 1,2-diacyl-sn-glycero-3-phospho-(1D-myo-inositol)(out). It catalyses the reaction a 1,2-diacyl-sn-glycero-3-phosphate(in) = a 1,2-diacyl-sn-glycero-3-phosphate(out). Functionally, catalyzes the transfer of phosphatidylinositol (PI) and phosphatidic acid (PA) between membranes. Binds PA derived from the phospholipase D signaling pathway and among the cellular PA species, preferably binds to the C16:0/16:1 and C16:1/18:1 PA species. In terms of biological role, specifically binds to phosphatidylinositol but not to other phospholipids and may play a role in the phosphoinositide-mediated signaling in the neural development. The sequence is that of Cytoplasmic phosphatidylinositol transfer protein 1 (Pitpnc1) from Mus musculus (Mouse).